The sequence spans 458 residues: V-type sodium ATPase subunit B (458 aa).

This sequence belongs to the ATPase alpha/beta chains family.

In terms of biological role, involved in ATP-driven sodium extrusion. In Enterococcus hirae (strain ATCC 9790 / DSM 20160 / JCM 8729 / LMG 6399 / NBRC 3181 / NCIMB 6459 / NCDO 1258 / NCTC 12367 / WDCM 00089 / R), this protein is V-type sodium ATPase subunit B (ntpB).